Consider the following 769-residue polypeptide: Phosphatidylinositol 4-phosphate 5-kinase 8 (769 aa).

MORN repeat units lie at residues 16-38 (YSGQ…DGII), 39-61 (YEGD…SGAK), 62-84 (YEGD…DGSV), 85-107 (YAGA…NSDV), 108-130 (YDGS…NGNR), 131-153 (FIGN…NGDL), 154-176 (FNGF…DGGF), and 177-198 (YFGT…AGSK). Residues 266–289 (PPRDFMHHGPSSKSARSVDSGQSE) form a disordered region. A compositionally biased stretch (polar residues) spans 276 to 288 (SSKSARSVDSGQS). Residues 344–765 (WNHYLMLNLQ…RFIDFLLKVF (422 aa)) enclose the PIPK domain. The tract at residues 725-746 (YNMKKKVEHTCKSMKYDPMTIS) is activation loop.

It carries out the reaction a 1,2-diacyl-sn-glycero-3-phospho-(1D-myo-inositol 4-phosphate) + ATP = a 1,2-diacyl-sn-glycero-3-phospho-(1D-myo-inositol-4,5-bisphosphate) + ADP + H(+). This Arabidopsis thaliana (Mouse-ear cress) protein is Phosphatidylinositol 4-phosphate 5-kinase 8 (PIP5K8).